We begin with the raw amino-acid sequence, 187 residues long: High affinity copper uptake protein 1 (187 aa).

Residues 1-65 are Extracellular-facing; that stretch reads MRMNHMEMHH…SSLVINTPGE (65 aa). Positions 9–10 match the Bis-His motif motif; it reads HH. The N-linked (GlcNAc...) asparagine glycan is linked to Asn-19. An O-linked (GalNAc...) threonine glycan is attached at Thr-30. The helical transmembrane segment at 66 to 86 threads the bilayer; sequence MAGAFVAVFLLAMFYEGLKIA. The Cytoplasmic portion of the chain corresponds to 87–129; that stretch reads REGLLRKSQVSIRYNSMPVPGPNGTILMETHKTVGQQMLSFPH. Thr-111 carries the phosphothreonine modification. Residues 130 to 150 form a helical membrane-spanning segment; it reads LLQTVLHIIQVVISYFLMLIF. The Extracellular portion of the chain corresponds to 151–153; that stretch reads MTY. Residues 154–174 form a helical membrane-spanning segment; that stretch reads NGYLCIAVAAGAGTGYFLFSW. Residues 175–187 lie on the Cytoplasmic side of the membrane; the sequence is KKAVVVDITEHCH. Cysteine sulfenic acid (-SOH) is present on Cys-186.

Belongs to the copper transporter (Ctr) (TC 1.A.56) family. SLC31A subfamily. Homotrimer; is stabilized by cisplatin via interactions between cisplatin and the methionine-rich clusters, and could be crucial for the copper(2+) reduction process and copper(1+) stabilization. Heterotrimer between SLC31A1, CCS and SOD1; this heterotrimer is copper(1+)-mediated and its maintenance is regulated through SOD1 activation. Interacts with KDR; this interaction is induced upon VEGFA stimulation leading to SLC31A1 and KDR subsequent co-internalization to early endosomes, thereby activating KDR downstream signaling in endothelial cells. Interacts (via C-terminal domain) with ATOX1 (via dimer form); this interaction improves ATOX1 stability and controls intracellular copper(1+) levels. Interacts with SLC31A2; this interaction stabilizes SLC31A2 and protects its from ubiquitination and degradation. Interacts (via C-terminal domain) with CCS; this interaction is copper(1+)-mediated. In terms of processing, O-Glycosylation at Thr-30 protects from proteolytic cleavage in the N-terminal extracellular domain. Post-translationally, proteolytic cleavage, leading to a truncated form, is facilitated by SLC31A2 and initiated preferentially by CTSL and to a minor extend by CTSB in endolysosomal compartments. A post-CTSL/cathepsin L processing occurs to yield to the fully truncated form. Sulfenylated at Cys-186 after stimulation with VEGFA, which induces SLC31A1-KDR disulfide bond formation and their co-internalization to early endosomes, driving to a sustained VEGFR2 signaling.

The protein resides in the cell membrane. Its subcellular location is the early endosome membrane. It localises to the recycling endosome membrane. It is found in the apical cell membrane. The protein localises to the late endosome membrane. The protein resides in the basolateral cell membrane. The enzyme catalyses Cu(+)(out) = Cu(+)(in). The catalysed reaction is Ag(+)(out) = Ag(+)(in). Its activity is regulated as follows. Copper uptake is inhibited by cold temperature, silver and zinc ions. Platinum-containing chemotherapeutic agents uptake is inhibited by cold temperature and copper. Uniporter that mediates the transport of copper(1+) from the extracellular space to the cytoplasm, across the plasma membrane. Then, delivers directly copper(1+) to specific chaperone such as ATOX1, via a copper(1+)- mediated transient interaction between the C-terminal domain and a copper(1+) chaperone, thus controlling intracellular copper(1+) levels. May function in copper(1+) import from the apical membrane thus may drive intestinal copper absorption. The copper(1+) transport mechanism is sodium-independent, saturable and of high-affinity. Also mediates the uptake of silver(1+). May function in the influx of the platinum-containing chemotherapeutic agents. The platinum-containing chemotherapeutic agents uptake is saturable. Also participates in the first step of copper(2+) acquisition by cells through a direct transfer of copper(2+) from copper(2+) carriers in blood, such as ALB to the N-terminal domain of SLC31A1, leading to copper(2+) reduction and probably followed by copper(1+) stabilization. In addition, functions as a redox sensor to promote angiogenesis in endothelial cells, in a copper(1+) transport independent manner, by transmitting the VEGF-induced ROS signal through a sulfenylation at Cys-189 leading to a subsequent disulfide bond formation between SLC31A1 and KDR. The SLC31A1-KDR complex is then co-internalized to early endosomes, driving a sustained VEGFR2 signaling. Functionally, mobilizes copper(1+) out of the endosomal compartment, making copper(1+) available for export out of the cells. The protein is High affinity copper uptake protein 1 of Rattus norvegicus (Rat).